An 842-amino-acid polypeptide reads, in one-letter code: Glycogen phosphorylase, muscle form (842 aa).

Ser2 bears the N-acetylserine mark. The residue at position 15 (Ser15) is a Phosphoserine; by PHK; in form phosphorylase A. 2 residues coordinate AMP: Asp43 and Tyr76. Phosphotyrosine occurs at positions 204 and 227. 310 to 319 provides a ligand contact to AMP; the sequence is RRFKSSKFGS. Position 430 is a phosphoserine (Ser430). Phosphotyrosine is present on Tyr473. Ser514 is subject to Phosphoserine. At Lys681 the chain carries N6-(pyridoxal phosphate)lysine. Phosphoserine occurs at positions 747 and 748.

This sequence belongs to the glycogen phosphorylase family. Homodimer. Homotetramer; to form the enzymatically active phosphorylase A. It depends on pyridoxal 5'-phosphate as a cofactor. Phosphorylation of Ser-15 converts phosphorylase B (unphosphorylated) to phosphorylase A.

It carries out the reaction [(1-&gt;4)-alpha-D-glucosyl](n) + phosphate = [(1-&gt;4)-alpha-D-glucosyl](n-1) + alpha-D-glucose 1-phosphate. With respect to regulation, allosterically regulated through the non-covalent binding of metabolites, being activated by AMP and inhibited by ATP, ADP, and glucose-6-phosphate. The activity is also controlled by post-translational modifications including phosphorylation. In terms of biological role, allosteric enzyme that catalyzes the rate-limiting step in glycogen catabolism, the phosphorolytic cleavage of glycogen to produce glucose-1-phosphate, and plays a central role in maintaining cellular and organismal glucose homeostasis. This is Glycogen phosphorylase, muscle form from Mus musculus (Mouse).